Reading from the N-terminus, the 140-residue chain is MAHTMRVEVVSAEEEIFSGEAEFVALPGESGELGILPGHTPLITRIRPGAVRIKIAGQAEDEFVFVAGGILEVQPHGVTVLADTAIRGADLDEAKAAEAKRLAEEALVNKESKIDYAQAQAELATAIAQLAAIQRLRQKR.

Belongs to the ATPase epsilon chain family. As to quaternary structure, F-type ATPases have 2 components, CF(1) - the catalytic core - and CF(0) - the membrane proton channel. CF(1) has five subunits: alpha(3), beta(3), gamma(1), delta(1), epsilon(1). CF(0) has three main subunits: a, b and c.

The protein resides in the cell inner membrane. Produces ATP from ADP in the presence of a proton gradient across the membrane. In Herminiimonas arsenicoxydans, this protein is ATP synthase epsilon chain.